We begin with the raw amino-acid sequence, 208 residues long: Small ribosomal subunit protein uS4 (208 aa).

Positions 98-158 constitute an S4 RNA-binding domain; that stretch reads RRLDNIAYRL…EKSRKVACIN (61 aa).

This sequence belongs to the universal ribosomal protein uS4 family. In terms of assembly, part of the 30S ribosomal subunit. Contacts protein S5. The interaction surface between S4 and S5 is involved in control of translational fidelity.

In terms of biological role, one of the primary rRNA binding proteins, it binds directly to 16S rRNA where it nucleates assembly of the body of the 30S subunit. With S5 and S12 plays an important role in translational accuracy. In Geotalea uraniireducens (strain Rf4) (Geobacter uraniireducens), this protein is Small ribosomal subunit protein uS4.